We begin with the raw amino-acid sequence, 299 residues long: ATP phosphoribosyltransferase (299 aa).

This sequence belongs to the ATP phosphoribosyltransferase family. Long subfamily. Mg(2+) serves as cofactor.

Its subcellular location is the cytoplasm. The enzyme catalyses 1-(5-phospho-beta-D-ribosyl)-ATP + diphosphate = 5-phospho-alpha-D-ribose 1-diphosphate + ATP. The protein operates within amino-acid biosynthesis; L-histidine biosynthesis; L-histidine from 5-phospho-alpha-D-ribose 1-diphosphate: step 1/9. Its activity is regulated as follows. Feedback inhibited by histidine. In terms of biological role, catalyzes the condensation of ATP and 5-phosphoribose 1-diphosphate to form N'-(5'-phosphoribosyl)-ATP (PR-ATP). Has a crucial role in the pathway because the rate of histidine biosynthesis seems to be controlled primarily by regulation of HisG enzymatic activity. The polypeptide is ATP phosphoribosyltransferase (Shewanella halifaxensis (strain HAW-EB4)).